The primary structure comprises 691 residues: ERI1 exoribonuclease 2 (691 aa).

Positions leucine 37 to alanine 226 constitute an Exonuclease domain. Mg(2+)-binding residues include aspartate 41, glutamate 43, and aspartate 156. The active-site Proton acceptor is the glutamate 43. Glutamate 43 contacts AMP. Histidine 213 (proton acceptor) is an active-site residue. An AMP-binding site is contributed by histidine 213. Residue aspartate 218 coordinates Mg(2+). Cysteine 597, cysteine 599, cysteine 622, and cysteine 634 together coordinate Zn(2+). The segment at cysteine 597 to leucine 643 adopts a GRF-type zinc-finger fold.

Belongs to the ERI2 family. It depends on Mg(2+) as a cofactor.

The polypeptide is ERI1 exoribonuclease 2 (ERI2) (Homo sapiens (Human)).